Reading from the N-terminus, the 459-residue chain is Type I restriction enzyme HindI specificity subunit (459 aa).

It belongs to the type-I restriction system S methylase family. In terms of assembly, the type I restriction/modification system is composed of three polypeptides R, M and S; the restriction enzyme has stoichiometry R(2)M(2)S(1) while the methyltransferase is M(2)S(1).

In terms of biological role, the specificity (S) subunit of a type I restriction enzyme; this subunit dictates DNA sequence specificity. The M and S subunits together form a methyltransferase (MTase) that methylates adenosines in the sequence 5'-RAACN(5)TAG-3'. Methylation protects against cleavage by HindI. In the presence of the R subunit the complex can also act as an endonuclease, binding to the same target sequence but cutting the DNA some distance from this site. Whether the DNA is cut or modified depends on the methylation state of the target sequence. When the target site is unmodified, the DNA is cut. When the target site is hemimethylated, the complex acts as a maintenance MTase modifying the DNA so that both strands become methylated. After locating a non-methylated recognition site, the enzyme complex serves as a molecular motor that translocates DNA in an ATP-dependent manner until a collision occurs that triggers cleavage. The polypeptide is Type I restriction enzyme HindI specificity subunit (Haemophilus influenzae (strain ATCC 51907 / DSM 11121 / KW20 / Rd)).